Consider the following 261-residue polypeptide: Indole-3-glycerol phosphate synthase (261 aa).

It belongs to the TrpC family.

It carries out the reaction 1-(2-carboxyphenylamino)-1-deoxy-D-ribulose 5-phosphate + H(+) = (1S,2R)-1-C-(indol-3-yl)glycerol 3-phosphate + CO2 + H2O. It participates in amino-acid biosynthesis; L-tryptophan biosynthesis; L-tryptophan from chorismate: step 4/5. In Campylobacter hominis (strain ATCC BAA-381 / DSM 21671 / CCUG 45161 / LMG 19568 / NCTC 13146 / CH001A), this protein is Indole-3-glycerol phosphate synthase.